The sequence spans 263 residues: MKVAVSGFKGRMGHEVVKTVLREEDLELVAVLDHEPKEKNIREIVEFSSLDVPVYANLSEMLEEAKPDCVVDFTTPKVGYSNTKTILEHGVRAVVGTTGFTPEQIESLREIAETKKIGALIAPNFAVGAVLMMQFAQKAAKYFPNVEIIELHHDNKLDAPSGTAVKTAEMMAENRTFVKQGAEDEVELMEGARGAEYEGMRIHSVRLPGLVAHQEVIFGAEGQGLTIRHDSYDRISFMSGVALSIRKTKELETLIYGLENILD.

NAD(+)-binding positions include 7 to 12, 96 to 98, and 122 to 125; these read GFKGRM, GTT, and APNF. The active-site Proton donor/acceptor is the His-152. (S)-2,3,4,5-tetrahydrodipicolinate is bound at residue His-153. The active-site Proton donor is the Lys-156. 162–163 provides a ligand contact to (S)-2,3,4,5-tetrahydrodipicolinate; it reads GT.

This sequence belongs to the DapB family.

It is found in the cytoplasm. The enzyme catalyses (S)-2,3,4,5-tetrahydrodipicolinate + NAD(+) + H2O = (2S,4S)-4-hydroxy-2,3,4,5-tetrahydrodipicolinate + NADH + H(+). It catalyses the reaction (S)-2,3,4,5-tetrahydrodipicolinate + NADP(+) + H2O = (2S,4S)-4-hydroxy-2,3,4,5-tetrahydrodipicolinate + NADPH + H(+). It functions in the pathway amino-acid biosynthesis; L-lysine biosynthesis via DAP pathway; (S)-tetrahydrodipicolinate from L-aspartate: step 4/4. Functionally, catalyzes the conversion of 4-hydroxy-tetrahydrodipicolinate (HTPA) to tetrahydrodipicolinate. The protein is 4-hydroxy-tetrahydrodipicolinate reductase of Listeria welshimeri serovar 6b (strain ATCC 35897 / DSM 20650 / CCUG 15529 / CIP 8149 / NCTC 11857 / SLCC 5334 / V8).